We begin with the raw amino-acid sequence, 290 residues long: Acetyl-coenzyme A carboxylase carboxyl transferase subunit beta (290 aa).

Residues 30-290 (IMTKCPKCKK…HAGQEVNKDA (261 aa)) enclose the CoA carboxyltransferase N-terminal domain. The Zn(2+) site is built by cysteine 34, cysteine 37, cysteine 53, and cysteine 56. A C4-type zinc finger spans residues 34 to 56 (CPKCKKIMYTKELSENLNVCFNC).

It belongs to the AccD/PCCB family. As to quaternary structure, acetyl-CoA carboxylase is a heterohexamer composed of biotin carboxyl carrier protein (AccB), biotin carboxylase (AccC) and two subunits each of ACCase subunit alpha (AccA) and ACCase subunit beta (AccD). The cofactor is Zn(2+).

It is found in the cytoplasm. The catalysed reaction is N(6)-carboxybiotinyl-L-lysyl-[protein] + acetyl-CoA = N(6)-biotinyl-L-lysyl-[protein] + malonyl-CoA. The protein operates within lipid metabolism; malonyl-CoA biosynthesis; malonyl-CoA from acetyl-CoA: step 1/1. Functionally, component of the acetyl coenzyme A carboxylase (ACC) complex. Biotin carboxylase (BC) catalyzes the carboxylation of biotin on its carrier protein (BCCP) and then the CO(2) group is transferred by the transcarboxylase to acetyl-CoA to form malonyl-CoA. The chain is Acetyl-coenzyme A carboxylase carboxyl transferase subunit beta from Staphylococcus carnosus (strain TM300).